A 749-amino-acid chain; its full sequence is Myosin-binding protein 2 (749 aa).

A helical membrane pass occupies residues 17–37 (ITLILVYAFLEWSLIFFILLN). Positions 164-184 (NLNDSQEETEEKKVPQSHEKL) are disordered. Residues 173–184 (EEKKVPQSHEKL) show a composition bias toward basic and acidic residues. The GTD-binding domain occupies 411–509 (LTVDKLKFEL…ELEKELEVYR (99 aa)). Residues 589–621 (ERLSILGRLKFLEEKLTDLNNEEDDEEEAKTFE) adopt a coiled-coil conformation. The disordered stretch occupies residues 608–640 (NNEEDDEEEAKTFESNGSINGNEHIHGKETNGK). Positions 630 to 639 (EHIHGKETNG) are enriched in basic and acidic residues. Positions 676–710 (DSEKGENVTIEEEVDELYERLEALEADREFLRHCV) form a coiled coil.

In terms of assembly, interacts with myosin XI-K and XI-1. Expressed in leaf epidermal cells, roots and root hairs.

It is found in the endomembrane system. Its function is as follows. Membrane-anchored myosin receptors that define a distinct, plant-specific transport vesicle compartment. This Arabidopsis thaliana (Mouse-ear cress) protein is Myosin-binding protein 2.